The sequence spans 205 residues: Spermatogenesis-associated protein 24 (205 aa).

Residues 17–166 (LALDQLRDVI…QQKQIFRNHM (150 aa)) are a coiled coil. The required for interaction with CBX5 and TBPL1 stretch occupies residues 138–185 (EDILNGKENEIKELQQVISQQKQIFRNHMSDFRIQKQQESYMAQVLDQ). The tract at residues 180 to 205 (AQVLDQKHKKASGTRQARSHQHPREK) is disordered. A compositionally biased stretch (basic residues) spans 186 to 205 (KHKKASGTRQARSHQHPREK).

Belongs to the SPATA24 family. Homodimer. Interacts with CBX3, CBX5, GMNN, GTF2B, TBPL1 and the polycomb proteins PHCF2, RNF2 and SCMH1 but not with CBX1 or PCGF2.

The protein resides in the cytoplasm. It localises to the nucleus. It is found in the nucleolus. Its subcellular location is the nucleoplasm. Functionally, binds DNA with high affinity but does not bind to TATA boxes. Synergises with GMNN and TBP in activation of TATA box-containing promoters and with GMNN and TBPL1 in activation of the NF1 TATA-less promoter. May play a role in cytoplasm movement and removal during spermiogenesis. This chain is Spermatogenesis-associated protein 24 (SPATA24), found in Homo sapiens (Human).